A 286-amino-acid polypeptide reads, in one-letter code: MLIALLLISYQLIKHGYRAADIKNLYTILEGEELRRQKDLSAKLRWGIVDEILWTIIVANGAILFTAHYVLIGLKILDLIAIFVVMLSGVMLYAPLAFLFLYPVVRAFEKNFPPSNPQFLLSHGLICTVSSLIVYEKLEQLWWDPLLVGFFWIAAGFVSFFTNRRFEVLVFLLLIAPLALLSVKCPGAILPILLAKSECSLRIQATFLVKLAVLIFASLAAVALVLQVFGYKSLRELSEKRKAAIKQGKYNPLRDPIIWIAWIMLTSLGLLIASFMERGEISPNML.

Helical transmembrane passes span Ile52–Leu74, Leu79–Leu101, Trp142–Phe161, Val168–Leu190, Ile203–Val225, and Ile257–Met276.

Its subcellular location is the cell membrane. This is an uncharacterized protein from Archaeoglobus fulgidus (strain ATCC 49558 / DSM 4304 / JCM 9628 / NBRC 100126 / VC-16).